Reading from the N-terminus, the 163-residue chain is Small ribosomal subunit protein eS10A (163 aa).

Residues 92–163 are disordered; the sequence is LTQTTRSNAV…GFGRASRYDN (72 aa). Residues 105 to 116 show a composition bias toward gly residues; sequence GGPGGPGGGFGG.

It belongs to the eukaryotic ribosomal protein eS10 family.

It localises to the cytoplasm. This chain is Small ribosomal subunit protein eS10A (RpS10a), found in Drosophila melanogaster (Fruit fly).